A 466-amino-acid polypeptide reads, in one-letter code: Ribulose bisphosphate carboxylase large chain (466 aa).

K4 carries the post-translational modification N6,N6,N6-trimethyllysine. Substrate is bound by residues N113 and T163. The Proton acceptor role is filled by K165. K167 contacts substrate. Mg(2+) is bound by residues K191, D193, and E194. K191 carries the post-translational modification N6-carboxylysine. H284 functions as the Proton acceptor in the catalytic mechanism. The substrate site is built by R285, H317, and S369.

This sequence belongs to the RuBisCO large chain family. Type I subfamily. Heterohexadecamer of 8 large chains and 8 small chains; disulfide-linked. The disulfide link is formed within the large subunit homodimers. Requires Mg(2+) as cofactor. Post-translationally, the disulfide bond which can form in the large chain dimeric partners within the hexadecamer appears to be associated with oxidative stress and protein turnover.

The protein resides in the plastid. Its subcellular location is the chloroplast. It carries out the reaction 2 (2R)-3-phosphoglycerate + 2 H(+) = D-ribulose 1,5-bisphosphate + CO2 + H2O. The catalysed reaction is D-ribulose 1,5-bisphosphate + O2 = 2-phosphoglycolate + (2R)-3-phosphoglycerate + 2 H(+). Its function is as follows. RuBisCO catalyzes two reactions: the carboxylation of D-ribulose 1,5-bisphosphate, the primary event in carbon dioxide fixation, as well as the oxidative fragmentation of the pentose substrate in the photorespiration process. Both reactions occur simultaneously and in competition at the same active site. The protein is Ribulose bisphosphate carboxylase large chain of Aphelandra sinclairiana (Orange shrimp plant).